Here is a 369-residue protein sequence, read N- to C-terminus: Septin-5 (369 aa).

Phosphothreonine is present on threonine 13. The Septin-type G domain occupies 41–314 (KGFDFTLMVA…ENYRAHCIQQ (274 aa)). The G1 motif stretch occupies residues 51–58 (GESGLGKS). GTP is bound by residues 51-58 (GESGLGKS), threonine 85, and glycine 111. A G3 motif region spans residues 108–111 (DTPG). The residue at position 168 (arginine 168) is an Omega-N-methylarginine. A G4 motif region spans residues 189–192 (AKAD). 190-198 (KADCLVPSE) serves as a coordination point for GTP. Position 225 is a phosphoserine (serine 225). 2 residues coordinate GTP: glycine 248 and arginine 263. At serine 327 the chain carries Phosphoserine. Threonine 336 carries the post-translational modification Phosphothreonine. Residues 338-369 (DSETEKLIRMKDEELRRMQEMLQKMKQRMQDQ) adopt a coiled-coil conformation.

Belongs to the TRAFAC class TrmE-Era-EngA-EngB-Septin-like GTPase superfamily. Septin GTPase family. As to quaternary structure, septins polymerize into heterooligomeric protein complexes that form filaments, and can associate with cellular membranes, actin filaments and microtubules. GTPase activity is required for filament formation. Interacts with SEPTIN2 and SEPTIN5. In platelets, associated with a complex containing STX4. Interacts with PRKN; this interaction leads to SEPTIN5 ubiquitination and degradation. Interacts with DYRK1A. Interacts with STX1A; in the cerebellar cortex. In terms of processing, phosphorylated by DYRK1A. In terms of tissue distribution, expressed in brain and testis and at lower level in heart, spleen, lung and kidney.

Its subcellular location is the cytoplasm. The protein localises to the cytoskeleton. Filament-forming cytoskeletal GTPase. May play a role in cytokinesis (Potential). May play a role in platelet secretion. This chain is Septin-5, found in Rattus norvegicus (Rat).